We begin with the raw amino-acid sequence, 209 residues long: Response regulator protein VraR (209 aa).

The Response regulatory domain occupies 4–120 (KVLFVDDHEM…DIADAVRKTS (117 aa)). Aspartate 55 is subject to 4-aspartylphosphate. One can recognise an HTH luxR-type domain in the interval 141–206 (RAELYEMLTE…QAVIYAFQHN (66 aa)). Residues 165-184 (NQEIASASHITIKTVKTHVS) constitute a DNA-binding region (H-T-H motif).

In terms of assembly, homodimer. Phosphorylated by VraS. Phosphorylation state of VraR controls dimerization of the protein.

The protein resides in the cytoplasm. In terms of biological role, member of the two-component regulatory system VraS/VraR involved in the control of the cell wall peptidoglycan biosynthesis. Upon cellular stress, the histidine kinase VraS transfers the phosphoryl group onto VraR. Upon phosphorylation, VraR dimerizes at the N-terminal domain. In turn, phosphorylation-induced dimerization expands and enhances the VraR binding to its own promoter leading to increased expression and subsequent modulation of as many as 40 genes, which ultimately constitute the S.aureus response to cell wall damage. In addition, inhibits the host autophagic flux and delays the early stage of autophagosome formation, thereby promoting bacterial survival. Facilitates the ability of S.aureus to resist host polymorphonuclear leukocytes-mediated phagocytosis and killing thus contributing to immune evasion. This chain is Response regulator protein VraR (vraR), found in Staphylococcus aureus (strain Mu3 / ATCC 700698).